The primary structure comprises 535 residues: Calcium-dependent protein kinase 1 (535 aa).

The tract at residues 1 to 34 (MGCNQSKSANDVRGNKVNNVNSKKKNNKREDIND) is disordered. Glycine 2 carries the N-myristoyl glycine lipid modification. Cysteine 3 carries S-palmitoyl cysteine lipidation. The 268-residue stretch at 57-324 (YFKVRKLGSG…AEEALNSRWI (268 aa)) folds into the Protein kinase domain. Residues 63–71 (LGSGAYGEV) and lysine 86 contribute to the ATP site. Serine 65 carries the post-translational modification Phosphoserine. Serine 117 carries the phosphoserine modification. The active-site Proton acceptor is the aspartate 190. 2 positions are modified to phosphoserine: serine 216 and serine 219. Threonine 230 carries the post-translational modification Phosphothreonine. Serine 334 carries the post-translational modification Phosphoserine. The J domain autoinhibitory motif signature appears at 345 to 352 (NMRKFEGS). Positions 345 to 363 (NMRKFEGSQKLAQAAILFI) are j domain. The J domain interacts with the EF-hand domains motif lies at 353-363 (QKLAQAAILFI). EF-hand domains are found at residues 371-406 (EERK…LRNF), 415-450 (NVEE…KQIL), 451-486 (FSEE…GFYF), and 497-532 (VSEK…ICDN). Residues aspartate 384, asparagine 386, aspartate 388, glutamine 390, glutamate 395, aspartate 428, aspartate 430, asparagine 432, tyrosine 434, glutamate 439, aspartate 464, aspartate 466, serine 468, lysine 470, glutamate 475, aspartate 510, asparagine 512, aspartate 514, methionine 516, and glutamate 521 each contribute to the Ca(2+) site.

This sequence belongs to the protein kinase superfamily. Ser/Thr protein kinase family. CDPK subfamily. Monomer. Requires Mg(2+) as cofactor. Myristoylated. Myristoylation and palmitoylation are required for the localization to the parasitophorous vacuole membrane. In terms of processing, palmitoylated. Palmitoylation increases in merozoites in response to low level of extracellular K(+) in the host blood. Myristoylation and palmitoylation are required for the localization to the parasitophorous vacuole membrane. Post-translationally, phosphorylation at Thr-230 may regulate CDPK1 kinase activity. Phosphorylation increases in response to an increase in intracellular Ca(2+) levels. Autophosphorylated in vitro. Autophosphorylation does not affect membrane localization in vitro.

It localises to the membrane. The protein resides in the cell membrane. It is found in the parasitophorous vacuole membrane. Its subcellular location is the cytoplasm. The protein localises to the cell projection. It localises to the cilium. The protein resides in the flagellum. It is found in the host cell membrane. It carries out the reaction L-seryl-[protein] + ATP = O-phospho-L-seryl-[protein] + ADP + H(+). The catalysed reaction is L-threonyl-[protein] + ATP = O-phospho-L-threonyl-[protein] + ADP + H(+). Activated by calcium. Upon calcium binding to the EF-hand domains, the C-terminus of the junction domain (J domain) undergoes a conformational change which results in the dissociation of the pseudo-substrate inhibitory motif from the catalytic domain. This, in turn may facilitate the autophosphorylation of the activation loop at Thr-230, which leads to the kinase activation. Calcium-dependent protein kinase which acts as a sensor and effector of intracellular Ca(2+) levels probably in part downstream of cGMP-activated PKG kinase. During the liver stage, involved in sporozoite motility and thus in sporozoite invasion of host hepatocytes, probably together with CDPK4 and CDPK5. In the mosquito midgut and during the last stage of male gamete exflagellation, may play a role in the rupture of the host erythrocyte membrane. In the mosquito midgut, required for the differentiation of the zygote into the ookinete by promoting the translational activation of a subset of repressed mRNAs; these mRNAs are kept repressed in the zygote by the DOZI- or CITH-containing mRNP complexes. Dispensable during the asexual blood stage. This is Calcium-dependent protein kinase 1 from Plasmodium yoelii yoelii.